We begin with the raw amino-acid sequence, 154 residues long: Iron-sulfur cluster assembly 2 homolog, mitochondrial (154 aa).

A mitochondrion-targeting transit peptide spans 1 to 8 (MAAAWGSS). A disordered region spans residues 29 to 49 (SLGPQARREASSSSPEAGEGQ). Residues 39–49 (SSSSPEAGEGQ) show a composition bias toward low complexity. Fe cation contacts are provided by cysteine 79, cysteine 144, and cysteine 146.

This sequence belongs to the HesB/IscA family. As to quaternary structure, heterotetramer; forms a dimer of dimers with IBA57. Interacts with [2Fe-2S]-ISCA2 forming the heterodimer [2Fe- 2S]-ISCA2-IBA57 complex; [2Fe-2S] cluster binding is absolutely required to promote the complex formation.

Its subcellular location is the mitochondrion. In terms of biological role, involved in the maturation of mitochondrial 4Fe-4S proteins functioning late in the iron-sulfur cluster assembly pathway. May be involved in the binding of an intermediate of Fe/S cluster assembly. This chain is Iron-sulfur cluster assembly 2 homolog, mitochondrial (ISCA2), found in Homo sapiens (Human).